The chain runs to 453 residues: uncharacterized protein (453 aa).

It to S.faecalis plasmid PAM373 EP0012.

This is an uncharacterized protein from Listeria innocua serovar 6a (strain ATCC BAA-680 / CLIP 11262).